We begin with the raw amino-acid sequence, 293 residues long: EID1-like F-box protein 1 (293 aa).

Residues 16 to 68 (QCTKGHLNEDVLLLVFQHLNWNPKLVATLSCVCRWFDDFAKRVLWKEFCKTRA) form the F-box domain. Residues 245–293 (AIPSEDNNHTEKKQDNGFPRENVLKRRNSLLGGSENGPPPQKRLTNPNQ) form a disordered region. Residues 250 to 259 (DNNHTEKKQD) show a composition bias toward basic and acidic residues.

The sequence is that of EID1-like F-box protein 1 (EDL1) from Arabidopsis thaliana (Mouse-ear cress).